Here is a 441-residue protein sequence, read N- to C-terminus: ACT domain-containing protein ACR8 (441 aa).

ACT domains are found at residues 34–110 (IVKV…NIEV), 115–196 (ALEL…SAAK), 248–324 (VVNV…ALEG), and 326–405 (RLEL…TMYH).

In terms of tissue distribution, expressed in roots, leaves, flowers and siliques.

Functionally, may bind amino acids. The sequence is that of ACT domain-containing protein ACR8 from Arabidopsis thaliana (Mouse-ear cress).